Reading from the N-terminus, the 496-residue chain is Acetyl-coenzyme A carboxylase carboxyl transferase subunit beta, chloroplastic (496 aa).

Residues 229-496 (LWVQCENCYG…FFPLNKNFIK (268 aa)) enclose the CoA carboxyltransferase N-terminal domain. Residues Cys233, Cys236, Cys252, and Cys255 each coordinate Zn(2+). A C4-type zinc finger spans residues 233 to 255 (CENCYGLNYKKFFRLKLHICEQC).

This sequence belongs to the AccD/PCCB family. In terms of assembly, acetyl-CoA carboxylase is a heterohexamer composed of biotin carboxyl carrier protein, biotin carboxylase and 2 subunits each of ACCase subunit alpha and ACCase plastid-coded subunit beta (accD). Requires Zn(2+) as cofactor.

Its subcellular location is the plastid. It localises to the chloroplast stroma. It carries out the reaction N(6)-carboxybiotinyl-L-lysyl-[protein] + acetyl-CoA = N(6)-biotinyl-L-lysyl-[protein] + malonyl-CoA. The protein operates within lipid metabolism; malonyl-CoA biosynthesis; malonyl-CoA from acetyl-CoA: step 1/1. Component of the acetyl coenzyme A carboxylase (ACC) complex. Biotin carboxylase (BC) catalyzes the carboxylation of biotin on its carrier protein (BCCP) and then the CO(2) group is transferred by the transcarboxylase to acetyl-CoA to form malonyl-CoA. The chain is Acetyl-coenzyme A carboxylase carboxyl transferase subunit beta, chloroplastic from Ranunculus macranthus (Large buttercup).